The sequence spans 277 residues: DNA-binding transcriptional activator MhpR (277 aa).

In terms of domain architecture, HTH iclR-type spans 12-74; the sequence is VRGLTRGLML…PSDDSFRLTI (63 aa). A DNA-binding region (H-T-H motif) is located at residues 34 to 53; that stretch reads VGLLAELSGLHRTTVRRLLE. The region spanning 89 to 262 is the IclR-ED domain; the sequence is ISALAAPLLG…AKQIEEGVES (174 aa).

Its function is as follows. Activator of the mhpABCDFE operon coding for components of the 3-hydroxyphenylpropionate degradation pathway. In Escherichia coli (strain K12), this protein is DNA-binding transcriptional activator MhpR (mhpR).